A 233-amino-acid polypeptide reads, in one-letter code: Pyridoxine 5'-phosphate synthase (233 aa).

3-amino-2-oxopropyl phosphate is bound at residue Asn-6. 8–9 (DH) lines the 1-deoxy-D-xylulose 5-phosphate pocket. Residue Arg-17 participates in 3-amino-2-oxopropyl phosphate binding. The active-site Proton acceptor is the His-42. 1-deoxy-D-xylulose 5-phosphate is bound by residues Arg-44 and His-49. Glu-69 functions as the Proton acceptor in the catalytic mechanism. Thr-99 lines the 1-deoxy-D-xylulose 5-phosphate pocket. Residue His-186 is the Proton donor of the active site. Residues Gly-187 and 208–209 (GH) contribute to the 3-amino-2-oxopropyl phosphate site.

It belongs to the PNP synthase family. As to quaternary structure, homooctamer; tetramer of dimers.

The protein resides in the cytoplasm. It carries out the reaction 3-amino-2-oxopropyl phosphate + 1-deoxy-D-xylulose 5-phosphate = pyridoxine 5'-phosphate + phosphate + 2 H2O + H(+). It functions in the pathway cofactor biosynthesis; pyridoxine 5'-phosphate biosynthesis; pyridoxine 5'-phosphate from D-erythrose 4-phosphate: step 5/5. In terms of biological role, catalyzes the complicated ring closure reaction between the two acyclic compounds 1-deoxy-D-xylulose-5-phosphate (DXP) and 3-amino-2-oxopropyl phosphate (1-amino-acetone-3-phosphate or AAP) to form pyridoxine 5'-phosphate (PNP) and inorganic phosphate. This chain is Pyridoxine 5'-phosphate synthase, found in Anaplasma phagocytophilum (strain HZ).